The following is a 167-amino-acid chain: MATAGMLLKLNSQMNREFYASNLYLHLSNWCSEQSLNGTATFLRAQAQSNVTQMMRMFNFMKSVGATPIVKAIDVPGEKLNSLEELFQKTMEEYEQRSSTLAQLADEAKELNDDSTVNFLRDLEKEQQHDGLLLQTILDEVRSAKLAGMCPVQTDQHVLNVVSHQLH.

Residues 1-145 form the Ferritin-like diiron domain; it reads MATAGMLLKL…TILDEVRSAK (145 aa).

Belongs to the ferritin family. Prokaryotic subfamily.

The protein resides in the cytoplasm. This is Bacterial non-heme ferritin-like protein (ftnB) from Escherichia coli O157:H7.